The chain runs to 428 residues: Glutamate-1-semialdehyde 2,1-aminomutase 1 (428 aa).

At Lys268 the chain carries N6-(pyridoxal phosphate)lysine.

The protein belongs to the class-III pyridoxal-phosphate-dependent aminotransferase family. HemL subfamily. In terms of assembly, homodimer. The cofactor is pyridoxal 5'-phosphate.

The protein localises to the cytoplasm. It carries out the reaction (S)-4-amino-5-oxopentanoate = 5-aminolevulinate. The protein operates within porphyrin-containing compound metabolism; protoporphyrin-IX biosynthesis; 5-aminolevulinate from L-glutamyl-tRNA(Glu): step 2/2. The protein is Glutamate-1-semialdehyde 2,1-aminomutase 1 of Geobacillus kaustophilus (strain HTA426).